The primary structure comprises 142 residues: Large ribosomal subunit protein uL11 (142 aa).

The protein belongs to the universal ribosomal protein uL11 family. In terms of assembly, part of the ribosomal stalk of the 50S ribosomal subunit. Interacts with L10 and the large rRNA to form the base of the stalk. L10 forms an elongated spine to which L12 dimers bind in a sequential fashion forming a multimeric L10(L12)X complex. In terms of processing, one or more lysine residues are methylated.

Functionally, forms part of the ribosomal stalk which helps the ribosome interact with GTP-bound translation factors. The sequence is that of Large ribosomal subunit protein uL11 from Proteus mirabilis (strain HI4320).